Reading from the N-terminus, the 294-residue chain is 4-hydroxy-tetrahydrodipicolinate synthase (294 aa).

Position 44 (threonine 44) interacts with pyruvate. Tyrosine 132 (proton donor/acceptor) is an active-site residue. The Schiff-base intermediate with substrate role is filled by lysine 160. Valine 202 contributes to the pyruvate binding site.

This sequence belongs to the DapA family. As to quaternary structure, homotetramer; dimer of dimers.

Its subcellular location is the cytoplasm. The enzyme catalyses L-aspartate 4-semialdehyde + pyruvate = (2S,4S)-4-hydroxy-2,3,4,5-tetrahydrodipicolinate + H2O + H(+). The protein operates within amino-acid biosynthesis; L-lysine biosynthesis via DAP pathway; (S)-tetrahydrodipicolinate from L-aspartate: step 3/4. Its function is as follows. Catalyzes the condensation of (S)-aspartate-beta-semialdehyde [(S)-ASA] and pyruvate to 4-hydroxy-tetrahydrodipicolinate (HTPA). In Leptospira biflexa serovar Patoc (strain Patoc 1 / Ames), this protein is 4-hydroxy-tetrahydrodipicolinate synthase.